Consider the following 365-residue polypeptide: MSINLLDFDAKGLTGFCAEIGEKPFRARQLLRWIHRTGEADFDAMSDLAKGLREKLAAAAVIEPPKVISDHTASDGTRKWLLSVGAGNGIETVYIPETSRGTLCISSQVGCALACAFCSTGRQGFNRNLTVAEIIGQLWWANKALTETFTSEAGRERPITNIVMMGMGEPLTNFENVVTSLDLMLDDNAYGLSRRRVTVSTSGIIPAMDRLRERCPVALAVSLHAPNDALRDQLVPINRKYPIRELLGACERYLQSAPRDFITFEYVMLDGVNDSVAQARELVQLVRDIPCKLNLIPFNPFPDSGFRRSSANAVSRFRDVLMEAGLVTTVRKTRGDDIAAACGQLAGKVLDKTRRVPRNIAEAAG.

The Proton acceptor role is filled by Glu91. The region spanning 97–337 is the Radical SAM core domain; the sequence is ETSRGTLCIS…TTVRKTRGDD (241 aa). A disulfide bridge links Cys104 with Cys342. [4Fe-4S] cluster contacts are provided by Cys111, Cys115, and Cys118. Residues 168 to 169, Ser200, 222 to 224, and Asn299 contribute to the S-adenosyl-L-methionine site; these read GE and SLH. Cys342 (S-methylcysteine intermediate) is an active-site residue.

It belongs to the radical SAM superfamily. RlmN family. It depends on [4Fe-4S] cluster as a cofactor.

The protein localises to the cytoplasm. It carries out the reaction adenosine(2503) in 23S rRNA + 2 reduced [2Fe-2S]-[ferredoxin] + 2 S-adenosyl-L-methionine = 2-methyladenosine(2503) in 23S rRNA + 5'-deoxyadenosine + L-methionine + 2 oxidized [2Fe-2S]-[ferredoxin] + S-adenosyl-L-homocysteine. The catalysed reaction is adenosine(37) in tRNA + 2 reduced [2Fe-2S]-[ferredoxin] + 2 S-adenosyl-L-methionine = 2-methyladenosine(37) in tRNA + 5'-deoxyadenosine + L-methionine + 2 oxidized [2Fe-2S]-[ferredoxin] + S-adenosyl-L-homocysteine. Functionally, specifically methylates position 2 of adenine 2503 in 23S rRNA and position 2 of adenine 37 in tRNAs. m2A2503 modification seems to play a crucial role in the proofreading step occurring at the peptidyl transferase center and thus would serve to optimize ribosomal fidelity. This is Dual-specificity RNA methyltransferase RlmN from Nitrosospira multiformis (strain ATCC 25196 / NCIMB 11849 / C 71).